The chain runs to 137 residues: Peptide methionine sulfoxide reductase MsrB (137 aa).

Residues 9-131 enclose the MsrB domain; sequence DAEWRAMLDD…NSASLRFDAT (123 aa). Zn(2+) is bound by residues Cys-48, Cys-51, Cys-97, and Cys-100. Cys-120 serves as the catalytic Nucleophile.

This sequence belongs to the MsrB Met sulfoxide reductase family. Zn(2+) serves as cofactor.

The enzyme catalyses L-methionyl-[protein] + [thioredoxin]-disulfide + H2O = L-methionyl-(R)-S-oxide-[protein] + [thioredoxin]-dithiol. This is Peptide methionine sulfoxide reductase MsrB from Herminiimonas arsenicoxydans.